Consider the following 245-residue polypeptide: Biosynthetic peptidoglycan transglycosylase (245 aa).

Residues 19–41 (CLRWVLAAPLLFAAASVLQVLFL) form a helical membrane-spanning segment.

The protein belongs to the glycosyltransferase 51 family.

The protein localises to the cell inner membrane. It catalyses the reaction [GlcNAc-(1-&gt;4)-Mur2Ac(oyl-L-Ala-gamma-D-Glu-L-Lys-D-Ala-D-Ala)](n)-di-trans,octa-cis-undecaprenyl diphosphate + beta-D-GlcNAc-(1-&gt;4)-Mur2Ac(oyl-L-Ala-gamma-D-Glu-L-Lys-D-Ala-D-Ala)-di-trans,octa-cis-undecaprenyl diphosphate = [GlcNAc-(1-&gt;4)-Mur2Ac(oyl-L-Ala-gamma-D-Glu-L-Lys-D-Ala-D-Ala)](n+1)-di-trans,octa-cis-undecaprenyl diphosphate + di-trans,octa-cis-undecaprenyl diphosphate + H(+). The protein operates within cell wall biogenesis; peptidoglycan biosynthesis. Peptidoglycan polymerase that catalyzes glycan chain elongation from lipid-linked precursors. The protein is Biosynthetic peptidoglycan transglycosylase of Xanthomonas oryzae pv. oryzae (strain KACC10331 / KXO85).